Consider the following 224-residue polypeptide: UPF0758 protein Neut_0782 (224 aa).

Residues 102-224 (IMDSPQSVRS…TVSFAERGLI (123 aa)) enclose the MPN domain. His173, His175, and Asp186 together coordinate Zn(2+). Residues 173 to 186 (HNHPSGVAEPSRAD) carry the JAMM motif motif.

The protein belongs to the UPF0758 family.

This chain is UPF0758 protein Neut_0782, found in Nitrosomonas eutropha (strain DSM 101675 / C91 / Nm57).